The sequence spans 255 residues: MEKLTIAQIKKMLTEEISSEQLAELKLDERKGVQLAIKSYEKRLKKIENEKLEFQNRLKIERDLWDKGIEYIAGVDEVGRGPLAGPVVTAAVILPHDFDVFEVNDSKQLSEKKREELYKKILEKAVAVSVGLSDNNLIDEVNIYEATRLAMKQAIESLNITPQKIIVDAMTIDTKIPQLRLIKGDAKSASVAAASIVAKVTRDHLMQFYARIYPGYGFEKNDGYGTKQHLEGLENKGVTPIHRQSFEPVKKILLK.

The RNase H type-2 domain occupies 70-255; the sequence is EYIAGVDEVG…FEPVKKILLK (186 aa). Positions 76, 77, and 168 each coordinate a divalent metal cation.

This sequence belongs to the RNase HII family. Requires Mn(2+) as cofactor. It depends on Mg(2+) as a cofactor.

The protein resides in the cytoplasm. It carries out the reaction Endonucleolytic cleavage to 5'-phosphomonoester.. Endonuclease that specifically degrades the RNA of RNA-DNA hybrids. This is Ribonuclease HII from Ligilactobacillus salivarius (strain UCC118) (Lactobacillus salivarius).